Reading from the N-terminus, the 116-residue chain is Large ribosomal subunit protein bL19 (116 aa).

Belongs to the bacterial ribosomal protein bL19 family.

This protein is located at the 30S-50S ribosomal subunit interface and may play a role in the structure and function of the aminoacyl-tRNA binding site. The polypeptide is Large ribosomal subunit protein bL19 (Blochmanniella pennsylvanica (strain BPEN)).